A 474-amino-acid polypeptide reads, in one-letter code: Glycogen synthase (474 aa).

An ADP-alpha-D-glucose-binding site is contributed by Lys15.

It belongs to the glycosyltransferase 1 family. Bacterial/plant glycogen synthase subfamily.

It carries out the reaction [(1-&gt;4)-alpha-D-glucosyl](n) + ADP-alpha-D-glucose = [(1-&gt;4)-alpha-D-glucosyl](n+1) + ADP + H(+). The protein operates within glycan biosynthesis; glycogen biosynthesis. Its function is as follows. Synthesizes alpha-1,4-glucan chains using ADP-glucose. The polypeptide is Glycogen synthase (Chlamydia muridarum (strain MoPn / Nigg)).